Reading from the N-terminus, the 61-residue chain is Putative antitoxin PYRAB11980 (61 aa).

It belongs to the UPF0165 family.

In terms of biological role, possibly the antitoxin component of a type II toxin-antitoxin (TA) system. The chain is Putative antitoxin PYRAB11980 from Pyrococcus abyssi (strain GE5 / Orsay).